We begin with the raw amino-acid sequence, 482 residues long: Class E basic helix-loop-helix protein 41 (482 aa).

Residue K31 forms a Glycyl lysine isopeptide (Lys-Gly) (interchain with G-Cter in SUMO2) linkage. A bHLH domain is found at 44–99; the sequence is TYKLPHRLIEKKRRDRINECIAQLKDLLPEHLKLTTLGHLEKAVVLELTLKHLKAL. Residues 67-71 form a necessary for interaction with RXRA and repressor activity towards RXRA region; that stretch reads LKDLL. Residue K121 forms a Glycyl lysine isopeptide (Lys-Gly) (interchain with G-Cter in SUMO2) linkage. In terms of domain architecture, Orange spans 131–166; it reads FHSGFQTCAKEVLQYLSRFESWTPREPRCVQLINHL. A Glycyl lysine isopeptide (Lys-Gly) (interchain with G-Cter in SUMO2) cross-link involves residue K210. Disordered regions lie at residues 228-298 and 438-482; these read AELA…GGAA and VAPL…KEAP. A compositionally biased stretch (basic and acidic residues) spans 246–256; that stretch reads AEARPDREKGK. A Glycyl lysine isopeptide (Lys-Gly) (interchain with G-Cter in SUMO2) cross-link involves residue K266. Residues 285 to 297 show a composition bias toward gly residues; that stretch reads RGGGSGGGPGGGA.

As to quaternary structure, homodimer. Heterodimer with BHLHE40/DEC1. Interacts with CIART and BMAL1. Interacts with RXRA. Interacts with NR0B2 and HNF1A. In terms of tissue distribution, highly expressed in skeletal muscle and brain, moderately expressed in pancreas and heart, weakly expressed in placenta, lung, liver and kidney.

It localises to the nucleus. In terms of biological role, transcriptional repressor involved in the regulation of the circadian rhythm by negatively regulating the activity of the clock genes and clock-controlled genes. Acts as the negative limb of a novel autoregulatory feedback loop (DEC loop) which differs from the one formed by the PER and CRY transcriptional repressors (PER/CRY loop). Both these loops are interlocked as it represses the expression of PER1 and in turn is repressed by PER1/2 and CRY1/2. Represses the activity of the circadian transcriptional activator: CLOCK-BMAL1 heterodimer by competing for the binding to E-box elements (5'-CACGTG-3') found within the promoters of its target genes. Negatively regulates its own expression and the expression of DBP and BHLHE41/DEC2. Acts as a corepressor of RXR and the RXR-LXR heterodimers and represses the ligand-induced RXRA/B/G, NR1H3/LXRA, NR1H4 and VDR transactivation activity. Inhibits HNF1A-mediated transactivation of CYP1A2, CYP2E1 AND CYP3A11. This chain is Class E basic helix-loop-helix protein 41, found in Homo sapiens (Human).